We begin with the raw amino-acid sequence, 466 residues long: Alpha-1A adrenergic receptor (466 aa).

At 1 to 27 the chain is on the extracellular side; the sequence is MVFLSGNASDSSNCTHPPPPVNISKAI. Asn-7, Asn-13, and Asn-22 each carry an N-linked (GlcNAc...) asparagine glycan. Residues 28–51 traverse the membrane as a helical segment; it reads LLGVILGGLILFGVLGNILVILSV. At 52 to 64 the chain is on the cytoplasmic side; it reads ACHRHLHSVTHYY. The helical transmembrane segment at 65 to 88 threads the bilayer; the sequence is IVNLAVADLLLTSTVLPFSAIFEI. Residues 89–99 lie on the Extracellular side of the membrane; the sequence is LGYWAFGRVFC. A disulfide bridge links Cys-99 with Cys-176. Residues 100–122 traverse the membrane as a helical segment; that stretch reads NVWAAVDVLCCTASIMGLCIISI. Residues 123-143 are Cytoplasmic-facing; that stretch reads DRYIGVSYPLRYPTIVTQKRG. Residues 144-167 form a helical membrane-spanning segment; the sequence is LMALLCVWALSLVISIGPLFGWRQ. The Extracellular portion of the chain corresponds to 168 to 181; the sequence is PAPEDETICQINEE. A helical transmembrane segment spans residues 182 to 205; that stretch reads PGYVLFSALGSFYVPLTIILVMYC. Over 206–273 the chain is Cytoplasmic; it reads RVYVVAKRES…FSREKKAAKT (68 aa). Position 215 is a phosphoserine; by PKA (Ser-215). A helical membrane pass occupies residues 274-297; that stretch reads LGIVVGCFVLCWLPFFLVMPIGSF. Residues 298 to 305 lie on the Extracellular side of the membrane; the sequence is FPDFRPSE. The helical transmembrane segment at 306-329 threads the bilayer; it reads TVFKIAFWLGYLNSCINPIIYPCS. The Cytoplasmic segment spans residues 330–466; it reads SQEFKKAFQN…ISLSENGEEV (137 aa). The short motif at 334 to 349 is the Nuclear localization signal element; that stretch reads KKAFQNVLRIQCLRRK. Cys-345 carries S-palmitoyl cysteine lipidation.

Belongs to the G-protein coupled receptor 1 family. Adrenergic receptor subfamily. ADRA1A sub-subfamily. As to quaternary structure, homo- and heterooligomer. Heterooligomerizes with ADRA1B homooligomers in cardiac myocytes. Interacts with CAVIN4.

It localises to the nucleus membrane. The protein localises to the cell membrane. Its subcellular location is the cytoplasm. It is found in the membrane. The protein resides in the caveola. This alpha-adrenergic receptor mediates its action by association with G proteins that activate a phosphatidylinositol-calcium second messenger system. Its effect is mediated by G(q) and G(11) proteins. Nuclear ADRA1A-ADRA1B heterooligomers regulate phenylephrine (PE)-stimulated ERK signaling in cardiac myocytes. This Bos taurus (Bovine) protein is Alpha-1A adrenergic receptor (ADRA1A).